A 66-amino-acid polypeptide reads, in one-letter code: COP9 signalosome complex subunit 6a (66 aa).

This sequence belongs to the peptidase M67A family. CSN6 subfamily. As to quaternary structure, component of the CSN complex, probably composed of CSN1, CSN2, CSN3, CSN4, CSN5 (CSN5A or CSN5B), CSN6 (CSN6A or CSN6B), CSN7 and CSN8.

The protein resides in the cytoplasm. The protein localises to the nucleus. Functionally, component of the COP9 signalosome complex (CSN), a complex involved in various cellular and developmental processes such as photomorphogenesis and auxin and jasmonate responses. The CSN complex is an essential regulator of the ubiquitin (Ubl) conjugation pathway by mediating the deneddylation of the cullin subunits of SCF-type E3 ligase complexes, leading to decrease the Ubl ligase activity of SCF. It is involved in repression of photomorphogenesis in darkness by regulating the activity of COP1-containing Ubl ligase complexes. The polypeptide is COP9 signalosome complex subunit 6a (CSN6A) (Brassica oleracea (Wild cabbage)).